A 1391-amino-acid polypeptide reads, in one-letter code: DNA-directed RNA polymerase subunit beta (1391 aa).

It belongs to the RNA polymerase beta chain family. As to quaternary structure, the RNAP catalytic core consists of 2 alpha, 1 beta, 1 beta' and 1 omega subunit. When a sigma factor is associated with the core the holoenzyme is formed, which can initiate transcription.

The enzyme catalyses RNA(n) + a ribonucleoside 5'-triphosphate = RNA(n+1) + diphosphate. In terms of biological role, DNA-dependent RNA polymerase catalyzes the transcription of DNA into RNA using the four ribonucleoside triphosphates as substrates. The protein is DNA-directed RNA polymerase subunit beta of Granulibacter bethesdensis (strain ATCC BAA-1260 / CGDNIH1).